The primary structure comprises 357 residues: Protein RecA (357 aa).

79 to 86 (GPESSGKT) lines the ATP pocket.

This sequence belongs to the RecA family.

It is found in the cytoplasm. In terms of biological role, can catalyze the hydrolysis of ATP in the presence of single-stranded DNA, the ATP-dependent uptake of single-stranded DNA by duplex DNA, and the ATP-dependent hybridization of homologous single-stranded DNAs. It interacts with LexA causing its activation and leading to its autocatalytic cleavage. This Chloroherpeton thalassium (strain ATCC 35110 / GB-78) protein is Protein RecA.